The sequence spans 360 residues: Peptide chain release factor 1 (360 aa).

An N5-methylglutamine modification is found at Q235. Residues 284-313 form a disordered region; it reads AKRQQAEASTRRNLLGSGDRSDRNRTYNFP.

It belongs to the prokaryotic/mitochondrial release factor family. Methylated by PrmC. Methylation increases the termination efficiency of RF1.

The protein resides in the cytoplasm. Functionally, peptide chain release factor 1 directs the termination of translation in response to the peptide chain termination codons UAG and UAA. The chain is Peptide chain release factor 1 from Escherichia coli O127:H6 (strain E2348/69 / EPEC).